The chain runs to 429 residues: Proton extrusion protein PxcA (429 aa).

The segment at 139–161 (LNGPEAPQTNGDRPDNKPKVETV) is disordered. Positions 150–161 (DRPDNKPKVETV) are enriched in basic and acidic residues. Helical transmembrane passes span 211-231 (FLLT…IAIT), 306-326 (AYEN…ILLI), 353-373 (LIIL…WEII), and 389-409 (FNFL…KYWI).

It belongs to the CemA family.

It is found in the cell inner membrane. Functionally, required for H(+) efflux immediately after light irradiation to form a rapid H(+) concentration gradient across the thylakoid membranes. Together with PxcL, contributes to transient H(+) uptake following dark to light transition. The sequence is that of Proton extrusion protein PxcA from Picosynechococcus sp. (strain ATCC 27264 / PCC 7002 / PR-6) (Agmenellum quadruplicatum).